Reading from the N-terminus, the 404-residue chain is L-cysteine:1D-myo-inositol 2-amino-2-deoxy-alpha-D-glucopyranoside ligase 1 (404 aa).

Cys-47 contributes to the Zn(2+) binding site. Residues 47–50 (CGIT), Thr-62, and 85–87 (NIT) each bind L-cysteinyl-5'-AMP. A 'HIGH' region motif is present at residues 49 to 59 (ITPYDSTHLGH). Positions 188–193 (ERGGDP) match the 'ERGGDP' region motif. Trp-228 is a binding site for L-cysteinyl-5'-AMP. Cys-232 provides a ligand contact to Zn(2+). 250-252 (GSD) provides a ligand contact to L-cysteinyl-5'-AMP. His-257 provides a ligand contact to Zn(2+). Residue Ile-284 participates in L-cysteinyl-5'-AMP binding. A 'KMSKS' region motif is present at residues 290-294 (KMSKS).

It belongs to the class-I aminoacyl-tRNA synthetase family. MshC subfamily. Monomer. The cofactor is Zn(2+).

The enzyme catalyses 1D-myo-inositol 2-amino-2-deoxy-alpha-D-glucopyranoside + L-cysteine + ATP = 1D-myo-inositol 2-(L-cysteinylamino)-2-deoxy-alpha-D-glucopyranoside + AMP + diphosphate + H(+). Its function is as follows. Catalyzes the ATP-dependent condensation of GlcN-Ins and L-cysteine to form L-Cys-GlcN-Ins. The protein is L-cysteine:1D-myo-inositol 2-amino-2-deoxy-alpha-D-glucopyranoside ligase 1 of Corynebacterium urealyticum (strain ATCC 43042 / DSM 7109).